Reading from the N-terminus, the 219-residue chain is Probable N-acetyltransferase camello (219 aa).

Transmembrane regions (helical) follow at residues 44–64 and 66–86; these read FITF…VLAL and SLVA…HGLA. Positions 62 to 211 constitute an N-acetyltransferase domain; sequence LALTSLVALL…VHQYTSFTVA (150 aa).

This sequence belongs to the camello family.

Its subcellular location is the golgi apparatus membrane. Functionally, plays a role in regulation of gastrulation, possibly by controlled reduction of cell adhesion in the periblastopore region which is necessary for optimal cell motility. This chain is Probable N-acetyltransferase camello, found in Xenopus tropicalis (Western clawed frog).